Consider the following 248-residue polypeptide: Ubiquinone biosynthesis O-methyltransferase (248 aa).

Residues arginine 40, glycine 71, aspartate 92, and methionine 135 each contribute to the S-adenosyl-L-methionine site.

The protein belongs to the methyltransferase superfamily. UbiG/COQ3 family.

The enzyme catalyses a 3-demethylubiquinol + S-adenosyl-L-methionine = a ubiquinol + S-adenosyl-L-homocysteine + H(+). It carries out the reaction a 3-(all-trans-polyprenyl)benzene-1,2-diol + S-adenosyl-L-methionine = a 2-methoxy-6-(all-trans-polyprenyl)phenol + S-adenosyl-L-homocysteine + H(+). It participates in cofactor biosynthesis; ubiquinone biosynthesis. In terms of biological role, O-methyltransferase that catalyzes the 2 O-methylation steps in the ubiquinone biosynthetic pathway. This is Ubiquinone biosynthesis O-methyltransferase from Ruegeria pomeroyi (strain ATCC 700808 / DSM 15171 / DSS-3) (Silicibacter pomeroyi).